The following is a 283-amino-acid chain: Agmatinase (283 aa).

Residues histidine 112, aspartate 131, histidine 133, aspartate 135, aspartate 211, and aspartate 213 each coordinate a divalent metal cation.

This sequence belongs to the arginase family. Agmatinase subfamily. Homotetramer. Requires a divalent metal cation as cofactor.

The catalysed reaction is agmatine + H2O = urea + putrescine. It participates in amine and polyamine biosynthesis; putrescine biosynthesis via agmatine pathway; putrescine from agmatine: step 1/1. Inhibited by putrescine. Activity is not affected by arginine and ornithine. Functionally, catalyzes the formation of putrescine from agmatine. Cannot use arginine. This is Agmatinase from Pyrococcus horikoshii (strain ATCC 700860 / DSM 12428 / JCM 9974 / NBRC 100139 / OT-3).